Consider the following 276-residue polypeptide: Cell division protein FtsQ (276 aa).

At 1-27 the chain is on the cytoplasmic side; that stretch reads MSQAALNTRNSEEEVSSRRNNGTRLAG. A helical membrane pass occupies residues 28–48; that stretch reads ILFLLTVLTTVLVSGWVVLGW. Over 49–276 the chain is Periplasmic; it reads MEDAQRLPLS…QQNQAQAEQQ (228 aa). One can recognise a POTRA domain in the interval 55 to 126; it reads LPLSKLVLTG…DELKIHLVEY (72 aa). The tract at residues 255-276 is disordered; that stretch reads GWAPLPPEESTQQQNQAQAEQQ. A compositionally biased stretch (low complexity) spans 266–276; that stretch reads QQQNQAQAEQQ.

Belongs to the FtsQ/DivIB family. FtsQ subfamily. As to quaternary structure, part of a complex composed of FtsB, FtsL and FtsQ. The complex can be formed before its localization to the division site. This tripartite complex can be divided further into a subcomplex of FtsB and FtsL, which forms in the absence of FtsQ. Interacts with FtsA, FtsK, FtsL, FtsB, FtsW, FtsI, FtsN, FtsX and YmgF.

The protein resides in the cell inner membrane. Functionally, essential cell division protein. May link together the upstream cell division proteins, which are predominantly cytoplasmic, with the downstream cell division proteins, which are predominantly periplasmic. May control correct divisome assembly. This is Cell division protein FtsQ from Escherichia coli (strain K12).